A 383-amino-acid polypeptide reads, in one-letter code: Activator of 90 kDa heat shock protein ATPase homolog (383 aa).

2 disordered regions span residues 97 to 126 and 209 to 228; these read KKVL…KPAE and EQSQ…TTTN.

Belongs to the AHA1 family. In terms of assembly, interacts with hspD/HSP90.

It is found in the cytoplasm. Its function is as follows. Co-chaperone that stimulates hspD/HSP90 ATPase activity. This Dictyostelium discoideum (Social amoeba) protein is Activator of 90 kDa heat shock protein ATPase homolog (ahsa).